A 364-amino-acid polypeptide reads, in one-letter code: 3-dehydroquinate synthase (364 aa).

Residues 71–76, 105–109, 129–130, lysine 142, lysine 151, and 169–172 each bind NAD(+); these read DGEQYK, GVIGD, TT, and CLKT. Residues glutamate 184, histidine 247, and histidine 264 each coordinate Zn(2+).

The protein belongs to the sugar phosphate cyclases superfamily. Dehydroquinate synthase family. It depends on Co(2+) as a cofactor. Zn(2+) serves as cofactor. NAD(+) is required as a cofactor.

It localises to the cytoplasm. It carries out the reaction 7-phospho-2-dehydro-3-deoxy-D-arabino-heptonate = 3-dehydroquinate + phosphate. Its pathway is metabolic intermediate biosynthesis; chorismate biosynthesis; chorismate from D-erythrose 4-phosphate and phosphoenolpyruvate: step 2/7. In terms of biological role, catalyzes the conversion of 3-deoxy-D-arabino-heptulosonate 7-phosphate (DAHP) to dehydroquinate (DHQ). The chain is 3-dehydroquinate synthase from Klebsiella pneumoniae (strain 342).